The following is a 142-amino-acid chain: Hemoglobin subunit zeta (142 aa).

S2 is modified (N-acetylserine). The 141-residue stretch at 2-142 (SLTKTERTII…VSSVLTEKYR (141 aa)) folds into the Globin domain. A Phosphothreonine modification is found at T29. S53 bears the Phosphoserine mark. H59 is a binding site for heme b. Phosphoserine is present on residues S73 and S82. H88 is a heme b binding site.

This sequence belongs to the globin family. Heterotetramer of two zeta chains and two epsilon chains in early embryonic hemoglobin Gower-1; two zeta chains and two gamma chains in fetal hemoglobin Portland-1. Heterotetramer of two zeta chains and two beta chains in hemoglobin Portland-2, detected in fetuses and neonates with homozygous alpha-thalassemia. As to expression, detected in fetal erythrocytes (at protein level).

In terms of biological role, the zeta chain is an alpha-type chain of mammalian embryonic hemoglobin. The sequence is that of Hemoglobin subunit zeta (HBZ) from Homo sapiens (Human).